We begin with the raw amino-acid sequence, 344 residues long: MEEKITYKNAGVDTEKGREFIQKIKRNVESTHGPRVIGGLGGFAGAYDVSVLKKYKHPILLSGTDGVGTKIELARLLKIYNTIGIDLVAMCVNDILVCGGEPLFFLDYIACGKLDPEKMDQIVSGIVQGCKMSNASLLGGETAEHPGTMKEDEFDLAGFVVGAVEKDSMIDGSTIRSGDKILGLESSGPHSNGFSLIRKLLLKEGKYLPTDPQQVKFLKDYALKPTRIYVSSILKLLQQVSVKGMVHITGGGYQENVPRILPQGTQSKFFKEKIPSGYFFEKIKKDHKIEELELFATFNMGIGYMVIVSEENAELAKKIMESSGEVVHEIGEIVSGNKEEVQFV.

This sequence belongs to the AIR synthase family.

The protein resides in the cytoplasm. The enzyme catalyses 2-formamido-N(1)-(5-O-phospho-beta-D-ribosyl)acetamidine + ATP = 5-amino-1-(5-phospho-beta-D-ribosyl)imidazole + ADP + phosphate + H(+). It functions in the pathway purine metabolism; IMP biosynthesis via de novo pathway; 5-amino-1-(5-phospho-D-ribosyl)imidazole from N(2)-formyl-N(1)-(5-phospho-D-ribosyl)glycinamide: step 2/2. This is Phosphoribosylformylglycinamidine cyclo-ligase from Leptospira interrogans serogroup Icterohaemorrhagiae serovar Lai (strain 56601).